The following is a 123-amino-acid chain: Fluoride-specific ion channel FluC 1 (123 aa).

4 helical membrane-spanning segments follow: residues 1-21, 34-54, 59-79, and 99-119; these read MVDL…RYTL, PLAT…LYGF, VIWL…STYI, and LTSI…ANFF. Na(+) is bound by residues Gly-70 and Thr-73.

It belongs to the fluoride channel Fluc/FEX (TC 1.A.43) family.

It localises to the cell membrane. It carries out the reaction fluoride(in) = fluoride(out). Na(+) is not transported, but it plays an essential structural role and its presence is essential for fluoride channel function. Functionally, fluoride-specific ion channel. Important for reducing fluoride concentration in the cell, thus reducing its toxicity. The polypeptide is Fluoride-specific ion channel FluC 1 (Carboxydothermus hydrogenoformans (strain ATCC BAA-161 / DSM 6008 / Z-2901)).